The sequence spans 62 residues: MAKVCYFTGRKTVSANNRSHAMNKTKRVAKPNLQKVTVLIDGKPKKVWASARALKSGKVERV.

Belongs to the bacterial ribosomal protein bL28 family.

The protein is Large ribosomal subunit protein bL28 of Streptococcus mutans serotype c (strain ATCC 700610 / UA159).